The chain runs to 383 residues: Acetylornithine deacetylase (383 aa).

A Zn(2+)-binding site is contributed by H80. D82 is an active-site residue. Residue D112 participates in Zn(2+) binding. Residue E144 is part of the active site. 3 residues coordinate Zn(2+): E145, E169, and H355.

The protein belongs to the peptidase M20A family. ArgE subfamily. As to quaternary structure, homodimer. It depends on Zn(2+) as a cofactor. Co(2+) is required as a cofactor. Glutathione serves as cofactor.

The protein resides in the cytoplasm. It carries out the reaction N(2)-acetyl-L-ornithine + H2O = L-ornithine + acetate. It functions in the pathway amino-acid biosynthesis; L-arginine biosynthesis; L-ornithine from N(2)-acetyl-L-ornithine (linear): step 1/1. In terms of biological role, catalyzes the hydrolysis of the amide bond of N(2)-acetylated L-amino acids. Cleaves the acetyl group from N-acetyl-L-ornithine to form L-ornithine, an intermediate in L-arginine biosynthesis pathway, and a branchpoint in the synthesis of polyamines. In Escherichia coli O8 (strain IAI1), this protein is Acetylornithine deacetylase.